The primary structure comprises 305 residues: tRNA dimethylallyltransferase (305 aa).

Residue 8-15 (GPTGTGKS) participates in ATP binding. Substrate is bound at residue 10-15 (TGTGKS).

It belongs to the IPP transferase family. In terms of assembly, monomer. Mg(2+) is required as a cofactor.

The enzyme catalyses adenosine(37) in tRNA + dimethylallyl diphosphate = N(6)-dimethylallyladenosine(37) in tRNA + diphosphate. Its function is as follows. Catalyzes the transfer of a dimethylallyl group onto the adenine at position 37 in tRNAs that read codons beginning with uridine, leading to the formation of N6-(dimethylallyl)adenosine (i(6)A). The sequence is that of tRNA dimethylallyltransferase from Mycobacterium sp. (strain KMS).